A 692-amino-acid polypeptide reads, in one-letter code: Potassium-transporting ATPase ATP-binding subunit (692 aa).

The next 4 helical transmembrane spans lie at 50–70, 77–97, 240–260, and 266–286; these read PIMF…FLPS, GWFN…ANFA, LTLI…YLGF, and VLVA…LSAI. The active-site 4-aspartylphosphate intermediate is the Asp-319. ATP-binding positions include Asp-356, Glu-360, 388 to 395, and Lys-407; that span reads FKAETRMS. Residues Asp-530 and Asp-534 each contribute to the Mg(2+) site. A run of 3 helical transmembrane segments spans residues 600 to 620, 628 to 648, and 672 to 692; these read FAII…LNIM, AILS…PLAM, and GGVI…GLFI.

Belongs to the cation transport ATPase (P-type) (TC 3.A.3) family. Type IA subfamily. As to quaternary structure, the system is composed of three essential subunits: KdpA, KdpB and KdpC.

The protein resides in the cell membrane. The catalysed reaction is K(+)(out) + ATP + H2O = K(+)(in) + ADP + phosphate + H(+). Part of the high-affinity ATP-driven potassium transport (or Kdp) system, which catalyzes the hydrolysis of ATP coupled with the electrogenic transport of potassium into the cytoplasm. This subunit is responsible for energy coupling to the transport system and for the release of the potassium ions to the cytoplasm. The polypeptide is Potassium-transporting ATPase ATP-binding subunit (Bacillus cereus (strain 03BB102)).